A 343-amino-acid polypeptide reads, in one-letter code: Anthranilate phosphoribosyltransferase (343 aa).

5-phospho-alpha-D-ribose 1-diphosphate contacts are provided by residues G84, 87–88 (GD), T92, 94–97 (NIST), 112–120 (KHGNRGVSS), and S124. Residue G84 participates in anthranilate binding. A Mg(2+)-binding site is contributed by S96. Anthranilate is bound at residue N115. R170 is an anthranilate binding site. Mg(2+) contacts are provided by D229 and E230.

It belongs to the anthranilate phosphoribosyltransferase family. As to quaternary structure, homodimer. Requires Mg(2+) as cofactor.

It catalyses the reaction N-(5-phospho-beta-D-ribosyl)anthranilate + diphosphate = 5-phospho-alpha-D-ribose 1-diphosphate + anthranilate. Its pathway is amino-acid biosynthesis; L-tryptophan biosynthesis; L-tryptophan from chorismate: step 2/5. In terms of biological role, catalyzes the transfer of the phosphoribosyl group of 5-phosphorylribose-1-pyrophosphate (PRPP) to anthranilate to yield N-(5'-phosphoribosyl)-anthranilate (PRA). The sequence is that of Anthranilate phosphoribosyltransferase from Burkholderia vietnamiensis (strain G4 / LMG 22486) (Burkholderia cepacia (strain R1808)).